Consider the following 256-residue polypeptide: Adenosylcobinamide-GDP ribazoletransferase (256 aa).

The next 6 helical transmembrane spans lie at 40-60 (YFPLIGWLVGAVAAAVYWLVL), 64-84 (PAQGVAVAVSMGATLLLTGAF), 114-134 (IGAFGAIAVCMALLLKWQLLS), 143-163 (ILVAMVAAHAASRAAAVSHLL), 194-214 (VVPLLWFGPMCAALIVVGLIL), and 234-254 (CLGMAQQIFELLILWGLLAWM).

It belongs to the CobS family. Requires Mg(2+) as cofactor.

The protein localises to the cell inner membrane. It catalyses the reaction alpha-ribazole + adenosylcob(III)inamide-GDP = adenosylcob(III)alamin + GMP + H(+). It carries out the reaction alpha-ribazole 5'-phosphate + adenosylcob(III)inamide-GDP = adenosylcob(III)alamin 5'-phosphate + GMP + H(+). It participates in cofactor biosynthesis; adenosylcobalamin biosynthesis; adenosylcobalamin from cob(II)yrinate a,c-diamide: step 7/7. Joins adenosylcobinamide-GDP and alpha-ribazole to generate adenosylcobalamin (Ado-cobalamin). Also synthesizes adenosylcobalamin 5'-phosphate from adenosylcobinamide-GDP and alpha-ribazole 5'-phosphate. The protein is Adenosylcobinamide-GDP ribazoletransferase of Ralstonia pickettii (strain 12J).